The sequence spans 418 residues: Acyltransferase calJ (418 aa).

The active-site Acyl-ester intermediate is the Ser-79. Arg-176 and Tyr-191 together coordinate substrate.

Belongs to the class-A beta-lactamase family.

It participates in secondary metabolite biosynthesis. In terms of biological role, acyltransferase; part of the gene cluster that mediates the biosynthesis of calbistrin A and related compounds. Calbistrin A is a secondary metabolite with an interesting structure that was recently found to have bioactivity against leukemia cells. It consists of two polyketides linked by an ester bond: a bicyclic decalin containing polyketide and a linear 12 carbon dioic acid structure. The polyketide synthase calA is probably responsible for forming the decalin moiety. Because calA lacks a designated enoylreductase (ER) domain, the required activity is provided by the trans-enoyl reductase calK. Following release from the PKS, calF then probably catalyzes the oxidation and the subsequent Diels Alder cycloisomerization that lead to the formation of the decalin moiety. The decalin polyketide backbone includes two C-methyl groups, at C7 and C11 in backbone, of which the C7 position is probably methylated by the methyltransferase domain of calA. A candidate for adding the methyl group at C11, if not done by CalA, is the cluster methyltransferase calH. Several additional tailoring enzymes within the cluster could be involved in the modification of the decalin polyketide product. Those include the 3 cytochrome P450 monooxygenases CalE, CalG and CalL, of which one might be responsible for the introduction of the extra hydroxyl group attached to the backbone of the decalin moiety, at position C9 in the backbone, that allows for attachment of the linear moiety. One tailoring enzyme activity that is expected to be involved in biosynthesis of calbistrin is an acyltransferase for connecting the two polyketide synthase products, and which could be performed by the cluster acyltransferase calJ. The enzyme responsible for the biosynthesis of the linear moiety, probably a second PKS, has not been identified yet. This Penicillium decumbens protein is Acyltransferase calJ.